A 348-amino-acid polypeptide reads, in one-letter code: Anthranilate phosphoribosyltransferase (348 aa).

5-phospho-alpha-D-ribose 1-diphosphate is bound by residues Gly93, 96–97, Thr101, 103–106, 121–129, and Ser133; these read GD, NVST, and KHGNRAVSS. Anthranilate is bound at residue Gly93. Residue Ser105 participates in Mg(2+) binding. An anthranilate-binding site is contributed by Asn124. Arg179 is a binding site for anthranilate. Mg(2+)-binding residues include Asp238 and Glu239.

It belongs to the anthranilate phosphoribosyltransferase family. Homodimer. Mg(2+) serves as cofactor.

The catalysed reaction is N-(5-phospho-beta-D-ribosyl)anthranilate + diphosphate = 5-phospho-alpha-D-ribose 1-diphosphate + anthranilate. It participates in amino-acid biosynthesis; L-tryptophan biosynthesis; L-tryptophan from chorismate: step 2/5. Catalyzes the transfer of the phosphoribosyl group of 5-phosphorylribose-1-pyrophosphate (PRPP) to anthranilate to yield N-(5'-phosphoribosyl)-anthranilate (PRA). This is Anthranilate phosphoribosyltransferase from Desulfotalea psychrophila (strain LSv54 / DSM 12343).